The sequence spans 465 residues: Cysteine--tRNA ligase (465 aa).

C29 lines the Zn(2+) pocket. The short motif at 31–41 (PTVYNYIHIGN) is the 'HIGH' region element. Positions 209, 234, and 238 each coordinate Zn(2+). A 'KMSKS' region motif is present at residues 266–270 (KMSKS). K269 contributes to the ATP binding site. Phosphoserine is present on S270.

It belongs to the class-I aminoacyl-tRNA synthetase family. As to quaternary structure, monomer. Zn(2+) is required as a cofactor.

The protein localises to the cytoplasm. It carries out the reaction tRNA(Cys) + L-cysteine + ATP = L-cysteinyl-tRNA(Cys) + AMP + diphosphate. The sequence is that of Cysteine--tRNA ligase from Bacillus cytotoxicus (strain DSM 22905 / CIP 110041 / 391-98 / NVH 391-98).